The sequence spans 226 residues: Phosphate propanoyltransferase (226 aa).

44-46 provides a ligand contact to CoA; that stretch reads VSN. Zn(2+)-binding residues include His48 and His50. Residues Met72, Lys90, and Arg97 each coordinate CoA. Arg103 provides a ligand contact to phosphate. Residue Glu109 coordinates Zn(2+). Residue Phe116 coordinates CoA. Zn(2+) contacts are provided by His157, His159, and His204. Asn211 provides a ligand contact to CoA.

Belongs to the PduL family. In terms of assembly, full-length protein forms large oligomers. Homodimer, when purified in the absence of the encapsulation peptide (EP, residues 1-47). The EP may influence oligomerization. Requires Zn(2+) as cofactor.

It is found in the bacterial microcompartment. The catalysed reaction is propanoyl-CoA + phosphate = propanoyl phosphate + CoA. It functions in the pathway polyol metabolism; 1,2-propanediol degradation. In terms of biological role, involved in 1,2-propanediol (1,2-PD) utilization within the bacterial microcompartment (BMC) dedicated to 1,2-PD degradation by catalyzing the conversion of propanoyl-CoA to propanoyl-phosphate. CoA is regenerated within the pdu BMC (for use by PduP) via this enzyme, although there must also be cofactor transport across the BMC. Directly targeted to the BMC. Phosphate is probably the first substrate to bind in the forward direction. CoA is probably the first substrate to bind in the reverse direction, and might bind to the enzyme as the BMC assembles, ensuring cofactor encapsulation. This is Phosphate propanoyltransferase from Rhodopseudomonas palustris (strain BisB18).